The following is a 761-amino-acid chain: Mitochondrial intermediate peptidase (761 aa).

The transit peptide at 1–37 directs the protein to the mitochondrion; it reads MLIQKILLNKEISRLPRILSILNYTGLRWLSGSSGRN. A Zn(2+)-binding site is contributed by histidine 547. The active site involves glutamate 548. The Zn(2+) site is built by histidine 551 and histidine 554.

This sequence belongs to the peptidase M3 family. It depends on Zn(2+) as a cofactor.

The protein resides in the mitochondrion matrix. It catalyses the reaction Release of an N-terminal octapeptide as second stage of processing of some proteins imported into the mitochondrion.. In terms of biological role, cleaves proteins, imported into the mitochondrion, to their mature size. While most mitochondrial precursor proteins are processed to the mature form in one step by mitochondrial processing peptidase (MPP), the sequential cleavage by MIP of an octapeptide after initial processing by MPP is a required step for a subgroup of nuclear-encoded precursor proteins destined for the matrix or the inner membrane. This is Mitochondrial intermediate peptidase (OCT1) from Candida glabrata (strain ATCC 2001 / BCRC 20586 / JCM 3761 / NBRC 0622 / NRRL Y-65 / CBS 138) (Yeast).